The following is a 117-amino-acid chain: MDKQEKRIRRARRTRAKIKELGAVRLCVHRSLNHIYAQLISPRDSKVLVCASTLEKEVRSQIKHGGNIQAATAIGKLIAQRAKKAGVTKVAFDRSGYKYHGRVRALAEAVREGGIEF.

This sequence belongs to the universal ribosomal protein uL18 family. As to quaternary structure, part of the 50S ribosomal subunit; part of the 5S rRNA/L5/L18/L25 subcomplex. Contacts the 5S and 23S rRNAs.

Functionally, this is one of the proteins that bind and probably mediate the attachment of the 5S RNA into the large ribosomal subunit, where it forms part of the central protuberance. The chain is Large ribosomal subunit protein uL18 from Coxiella burnetii (strain CbuK_Q154) (Coxiella burnetii (strain Q154)).